The following is a 440-amino-acid chain: Glutamyl-tRNA(Gln) amidotransferase subunit D (440 aa).

The 331-residue stretch at 94 to 424 (PSVTILGTGG…KEVRRMMLTN (331 aa)) folds into the Asparaginase/glutaminase domain. Active-site residues include threonine 104, threonine 180, aspartate 181, and lysine 258.

Belongs to the asparaginase 1 family. GatD subfamily. Heterodimer of GatD and GatE.

It carries out the reaction L-glutamyl-tRNA(Gln) + L-glutamine + ATP + H2O = L-glutaminyl-tRNA(Gln) + L-glutamate + ADP + phosphate + H(+). In terms of biological role, allows the formation of correctly charged Gln-tRNA(Gln) through the transamidation of misacylated Glu-tRNA(Gln) in organisms which lack glutaminyl-tRNA synthetase. The reaction takes place in the presence of glutamine and ATP through an activated gamma-phospho-Glu-tRNA(Gln). The GatDE system is specific for glutamate and does not act on aspartate. This chain is Glutamyl-tRNA(Gln) amidotransferase subunit D, found in Thermococcus kodakarensis (strain ATCC BAA-918 / JCM 12380 / KOD1) (Pyrococcus kodakaraensis (strain KOD1)).